Here is an 831-residue protein sequence, read N- to C-terminus: Elongator complex protein 2 (831 aa).

13 WD repeats span residues 56–100 (GHTA…VLKS), 105–152 (GHEG…VKYL), 158–200 (RDGF…FQKA), 205–246 (GHED…ASFE), 280–328 (GHEN…GVWL), 338–377 (GNTL…PRQW), 385–424 (GHFD…DQKD), 438–476 (IHGY…VENF), 565–609 (GHGY…QVQS), 612–651 (FHTL…SSEF), 667–706 (VHSR…HNPM), 718–762 (DVGS…QEIN), and 775–831 (SHSL…RRAL).

Belongs to the WD repeat ELP2 family. Component of the elongator complex which consists of ELP1, ELP2, ELP3, ELP4, ELP5 and ELP6. Interacts with STAT3 and JAKs.

Its subcellular location is the cytoplasm. The protein resides in the nucleus. Its pathway is tRNA modification; 5-methoxycarbonylmethyl-2-thiouridine-tRNA biosynthesis. Component of the elongator complex which is required for multiple tRNA modifications, including mcm5U (5-methoxycarbonylmethyl uridine), mcm5s2U (5-methoxycarbonylmethyl-2-thiouridine), and ncm5U (5-carbamoylmethyl uridine). The elongator comple catalyzes the formation of carboxymethyluridine in the wobble base at position 34 in tRNAs. This is Elongator complex protein 2 (Elp2) from Mus musculus (Mouse).